The chain runs to 362 residues: Probable dual-specificity RNA methyltransferase RlmN (362 aa).

Residue Glu105 is the Proton acceptor of the active site. The Radical SAM core domain occupies 111–344; it reads HEYGNSICVT…VTIRREQGHD (234 aa). A disulfide bridge connects residues Cys118 and Cys349. [4Fe-4S] cluster is bound by residues Cys125, Cys129, and Cys132. S-adenosyl-L-methionine-binding positions include 175 to 176, Ser207, 230 to 232, and Asn306; these read GE and SLH. Catalysis depends on Cys349, which acts as the S-methylcysteine intermediate.

Belongs to the radical SAM superfamily. RlmN family. It depends on [4Fe-4S] cluster as a cofactor.

It localises to the cytoplasm. The enzyme catalyses adenosine(2503) in 23S rRNA + 2 reduced [2Fe-2S]-[ferredoxin] + 2 S-adenosyl-L-methionine = 2-methyladenosine(2503) in 23S rRNA + 5'-deoxyadenosine + L-methionine + 2 oxidized [2Fe-2S]-[ferredoxin] + S-adenosyl-L-homocysteine. It catalyses the reaction adenosine(37) in tRNA + 2 reduced [2Fe-2S]-[ferredoxin] + 2 S-adenosyl-L-methionine = 2-methyladenosine(37) in tRNA + 5'-deoxyadenosine + L-methionine + 2 oxidized [2Fe-2S]-[ferredoxin] + S-adenosyl-L-homocysteine. In terms of biological role, specifically methylates position 2 of adenine 2503 in 23S rRNA and position 2 of adenine 37 in tRNAs. The polypeptide is Probable dual-specificity RNA methyltransferase RlmN (Bacillus thuringiensis subsp. konkukian (strain 97-27)).